Reading from the N-terminus, the 233-residue chain is Phosphatidylserine decarboxylase proenzyme (233 aa).

Residue Ser-190 is the Schiff-base intermediate with substrate; via pyruvic acid of the active site. At Ser-190 the chain carries Pyruvic acid (Ser); by autocatalysis.

The protein belongs to the phosphatidylserine decarboxylase family. PSD-A subfamily. In terms of assembly, heterodimer of a large membrane-associated beta subunit and a small pyruvoyl-containing alpha subunit. Pyruvate is required as a cofactor. Is synthesized initially as an inactive proenzyme. Formation of the active enzyme involves a self-maturation process in which the active site pyruvoyl group is generated from an internal serine residue via an autocatalytic post-translational modification. Two non-identical subunits are generated from the proenzyme in this reaction, and the pyruvate is formed at the N-terminus of the alpha chain, which is derived from the carboxyl end of the proenzyme. The post-translation cleavage follows an unusual pathway, termed non-hydrolytic serinolysis, in which the side chain hydroxyl group of the serine supplies its oxygen atom to form the C-terminus of the beta chain, while the remainder of the serine residue undergoes an oxidative deamination to produce ammonia and the pyruvoyl prosthetic group on the alpha chain.

It is found in the cell membrane. It catalyses the reaction a 1,2-diacyl-sn-glycero-3-phospho-L-serine + H(+) = a 1,2-diacyl-sn-glycero-3-phosphoethanolamine + CO2. It participates in phospholipid metabolism; phosphatidylethanolamine biosynthesis; phosphatidylethanolamine from CDP-diacylglycerol: step 2/2. Functionally, catalyzes the formation of phosphatidylethanolamine (PtdEtn) from phosphatidylserine (PtdSer). This is Phosphatidylserine decarboxylase proenzyme from Bartonella quintana (strain Toulouse) (Rochalimaea quintana).